Reading from the N-terminus, the 1051-residue chain is Leucine zipper protein 1 (1051 aa).

Residue Ala2 is modified to N-acetylalanine. The stretch at 11-354 (ASNRHLRFKL…KLQVKKQKEL (344 aa)) forms a coiled coil. Disordered stretches follow at residues 247–293 (ISST…KDLN), 374–401 (RTKL…HKRE), 432–554 (AAKA…SQVT), and 569–601 (ASSQ…SKAP). Residues 254–293 (KESRRKGSLDYLKQVENETRDKSENEKNRNQEDNKVKDLN) are compositionally biased toward basic and acidic residues. A phosphoserine mark is found at Ser256, Ser261, Ser395, Ser513, Ser571, Ser575, Ser612, and Ser660. The segment covering 569-578 (ASSQRASSEG) has biased composition (polar residues). The disordered stretch occupies residues 675-727 (VNTTITPEPEPKLQPNSREKVKSRGGTRTPLFENDKNAAVENDSAKSMRSSSN). A Phosphothreonine modification is found at Thr680. Ser691 is subject to Phosphoserine. Over residues 707 to 720 (ENDKNAAVENDSAK) the composition is skewed to basic and acidic residues. Ser746 is subject to Phosphoserine. A compositionally biased stretch (low complexity) spans 789-799 (VTSKVTSSITI). The segment at 789–837 (VTSKVTSSITIYPSDSSGPRAVPTEAPRERHTSTSNIQVGPPELTSVSN) is disordered. A required for interaction with FLNA region spans residues 834-884 (SVSNHISSPLELSIHKHDITLQLTEAERVGDGSPKNRAETVVSRSSILIKP). Ser906 carries the post-translational modification Phosphoserine. Residues 929–938 (RDLKCSEDPP) are compositionally biased toward basic and acidic residues. Positions 929 to 1000 (RDLKCSEDPP…TQSSLTASEV (72 aa)) are disordered. Polar residues-rich tracts occupy residues 946-958 (EATN…SSTD) and 989-999 (RRTQSSLTASE). Thr957 bears the Phosphothreonine mark. At Ser993 the chain carries Phosphoserine.

As to quaternary structure, component of the CERF-1 ISWI chromatin remodeling complex (also called the CECR2-containing remodeling factor (CERF) complex) at least composed of CECR2 and SMARCA1. Component of the CERF-5 ISWI chromatin remodeling complex at least composed of CECR2 and SMARCA5/SNF2H. LUZP1 is detected as part of the CERF-1 and CERF-5 complexes in embryonic stem (ES) cells where it is involved in complex stabilization but is not detected in the complexes in the testis. Interacts (via C-terminus) with LIMA1/EPLIN; both proteins restrict ciliation and may work together to regulate this process. Interacts with myosin light chain MYL9; the interaction results in inhibition of phosphorylation of MYL9 by DAPK3. Interacts with DAPK3; the interaction is likely to occur throughout the cell cycle and reduces the LUZP1-mediated suppression of MYL9 phosphorylation. Interacts with the chromosomal passenger complex (CPC); CPC kinase activity is required for localization of LUZP1 to the centromere. In terms of tissue distribution, expressed in cerebral cortex, cerebellum, hippocampus and brain stem.

The protein localises to the cytoplasm. Its subcellular location is the cytoskeleton. It localises to the microtubule organizing center. The protein resides in the centrosome. It is found in the cilium basal body. The protein localises to the midbody. Its subcellular location is the chromosome. It localises to the centromere. The protein resides in the spindle. It is found in the stress fiber. The protein localises to the nucleus. Its subcellular location is the cell projection. It localises to the dendrite. The protein resides in the perikaryon. It is found in the cell junction. The protein localises to the tight junction. F-actin cross-linking protein. Stabilizes actin and acts as a negative regulator of primary cilium formation. Positively regulates the phosphorylation of both myosin II and protein phosphatase 1 regulatory subunit PPP1R12A/MYPT1 and promotes the assembly of myosin II stacks within actin stress fibers. Inhibits the phosphorylation of myosin light chain MYL9 by DAPK3 and suppresses the constriction velocity of the contractile ring during cytokinesis. Binds to microtubules and promotes epithelial cell apical constriction by up-regulating levels of diphosphorylated myosin light chain (MLC) through microtubule-dependent inhibition of MLC dephosphorylation by myosin phosphatase. Involved in regulation of cell migration, nuclear size and centriole number, probably through regulation of the actin cytoskeleton. Component of the CERF-1 and CERF-5 chromatin remodeling complexes in embryonic stem cells where it acts to stabilize the complexes. Plays a role in embryonic brain and cardiovascular development. The chain is Leucine zipper protein 1 (Luzp1) from Rattus norvegicus (Rat).